The chain runs to 194 residues: Peptidyl-tRNA hydrolase (194 aa).

Tyrosine 17 serves as a coordination point for tRNA. Histidine 22 (proton acceptor) is an active-site residue. TRNA is bound by residues phenylalanine 68, asparagine 70, and asparagine 116.

The protein belongs to the PTH family. Monomer.

It localises to the cytoplasm. The enzyme catalyses an N-acyl-L-alpha-aminoacyl-tRNA + H2O = an N-acyl-L-amino acid + a tRNA + H(+). Functionally, hydrolyzes ribosome-free peptidyl-tRNAs (with 1 or more amino acids incorporated), which drop off the ribosome during protein synthesis, or as a result of ribosome stalling. Catalyzes the release of premature peptidyl moieties from peptidyl-tRNA molecules trapped in stalled 50S ribosomal subunits, and thus maintains levels of free tRNAs and 50S ribosomes. This chain is Peptidyl-tRNA hydrolase, found in Haemophilus influenzae (strain PittGG).